The chain runs to 179 residues: Endoribonuclease YbeY (179 aa).

Positions 141, 145, and 151 each coordinate Zn(2+).

This sequence belongs to the endoribonuclease YbeY family. It depends on Zn(2+) as a cofactor.

The protein localises to the cytoplasm. Its function is as follows. Single strand-specific metallo-endoribonuclease involved in late-stage 70S ribosome quality control and in maturation of the 3' terminus of the 16S rRNA. The sequence is that of Endoribonuclease YbeY from Synechocystis sp. (strain ATCC 27184 / PCC 6803 / Kazusa).